The chain runs to 288 residues: Nucleotide-binding protein Mlg_2233 (288 aa).

ATP is bound at residue 11–18 (GLSGSGKS). 63 to 66 (DARN) is a GTP binding site.

It belongs to the RapZ-like family.

Functionally, displays ATPase and GTPase activities. The chain is Nucleotide-binding protein Mlg_2233 from Alkalilimnicola ehrlichii (strain ATCC BAA-1101 / DSM 17681 / MLHE-1).